A 95-amino-acid polypeptide reads, in one-letter code: Aspartyl/glutamyl-tRNA(Asn/Gln) amidotransferase subunit C (95 aa).

Residues 51-95 are disordered; the sequence is PTSHATLTSSRLREDVTRPSLPPEKSLANAPAKSDTSFAVPKIIE.

This sequence belongs to the GatC family. Heterotrimer of A, B and C subunits.

The catalysed reaction is L-glutamyl-tRNA(Gln) + L-glutamine + ATP + H2O = L-glutaminyl-tRNA(Gln) + L-glutamate + ADP + phosphate + H(+). It catalyses the reaction L-aspartyl-tRNA(Asn) + L-glutamine + ATP + H2O = L-asparaginyl-tRNA(Asn) + L-glutamate + ADP + phosphate + 2 H(+). Functionally, allows the formation of correctly charged Asn-tRNA(Asn) or Gln-tRNA(Gln) through the transamidation of misacylated Asp-tRNA(Asn) or Glu-tRNA(Gln) in organisms which lack either or both of asparaginyl-tRNA or glutaminyl-tRNA synthetases. The reaction takes place in the presence of glutamine and ATP through an activated phospho-Asp-tRNA(Asn) or phospho-Glu-tRNA(Gln). This Myxococcus xanthus (strain DK1622) protein is Aspartyl/glutamyl-tRNA(Asn/Gln) amidotransferase subunit C.